Reading from the N-terminus, the 395-residue chain is Probable FMNH2-dependent monooxygenase SfnC (395 aa).

Involved in the dimethyl sulfide degradation pathway. The chain is Probable FMNH2-dependent monooxygenase SfnC from Pseudomonas putida (Arthrobacter siderocapsulatus).